Reading from the N-terminus, the 463-residue chain is L-seryl-tRNA(Sec) selenium transferase (463 aa).

An N6-(pyridoxal phosphate)lysine modification is found at Lys295.

Belongs to the SelA family. Homodecamer; pentamer of dimers. Binds only one seryl-tRNA(Sec) per dimer. It depends on pyridoxal 5'-phosphate as a cofactor.

The protein resides in the cytoplasm. It carries out the reaction L-seryl-tRNA(Sec) + selenophosphate + H(+) = L-selenocysteinyl-tRNA(Sec) + phosphate. It participates in aminoacyl-tRNA biosynthesis; selenocysteinyl-tRNA(Sec) biosynthesis; selenocysteinyl-tRNA(Sec) from L-seryl-tRNA(Sec) (bacterial route): step 1/1. In terms of biological role, converts seryl-tRNA(Sec) to selenocysteinyl-tRNA(Sec) required for selenoprotein biosynthesis. This is L-seryl-tRNA(Sec) selenium transferase from Salmonella enteritidis PT4 (strain P125109).